Reading from the N-terminus, the 222-residue chain is Germin-like protein subfamily 1 member 4 (222 aa).

The first 24 residues, 1 to 24 (MEGLLQFLLAKIILLALASSFVYC), serve as a signal peptide directing secretion. An intrachain disulfide couples Cys-34 to Cys-50. Asn-38 carries N-linked (GlcNAc...) asparagine glycosylation. In terms of domain architecture, Cupin type-1 spans 64 to 215 (SGLNVPGNTI…AFALDYNKVK (152 aa)). Positions 112 and 114 each coordinate Mn(2+). Asn-139 carries N-linked (GlcNAc...) asparagine glycosylation. His-161 is a binding site for Mn(2+).

This sequence belongs to the germin family. Oligomer (believed to be a pentamer but probably hexamer).

Its subcellular location is the secreted. The protein resides in the extracellular space. The protein localises to the apoplast. Functionally, may play a role in plant defense. Probably has no oxalate oxidase activity even if the active site is conserved. The protein is Germin-like protein subfamily 1 member 4 of Arabidopsis thaliana (Mouse-ear cress).